The primary structure comprises 147 residues: Ribonuclease H (147 aa).

Residues 1–142 form the RNase H type-1 domain; it reads MTEIVEIFTD…ADALARSAIT (142 aa). The Mg(2+) site is built by D10, E48, D70, and D134.

Belongs to the RNase H family. Monomer. Requires Mg(2+) as cofactor.

Its subcellular location is the cytoplasm. The enzyme catalyses Endonucleolytic cleavage to 5'-phosphomonoester.. Endonuclease that specifically degrades the RNA of RNA-DNA hybrids. This chain is Ribonuclease H, found in Nitrosococcus oceani (strain ATCC 19707 / BCRC 17464 / JCM 30415 / NCIMB 11848 / C-107).